The sequence spans 219 residues: MLRNKVRKTDTLIALNEVYESIQGEGLLVGLPSVFIRLQGCNLRCPWCDQPEALSFSGRKVKLSSLINELKKFTAKHIVITGGEPFAHRELPFIVEFLLSEGYSVQIETNGTLWVEEMEKFAEGIHITCSPKGVAKYYVHPKILKYAKELKFVVDKEFSKEVLKKEEFERFLREGKVVLQPESNRKEMMEKALKIQKELLKECYTVRVIPQVHKCFDLK.

Substrate contacts are provided by residues 22 to 24 (IQG) and arginine 37. Positions 28–219 (LVGLPSVFIR…PQVHKCFDLK (192 aa)) constitute a Radical SAM core domain. Residues cysteine 41, cysteine 45, and cysteine 48 each contribute to the [4Fe-4S] cluster site. Residue threonine 81 participates in substrate binding. Residues glycine 83 and 130 to 132 (SPK) each bind S-adenosyl-L-methionine.

Belongs to the radical SAM superfamily. 7-carboxy-7-deazaguanine synthase family. Homodimer. Requires [4Fe-4S] cluster as cofactor. S-adenosyl-L-methionine is required as a cofactor. The cofactor is Mg(2+).

The enzyme catalyses 6-carboxy-5,6,7,8-tetrahydropterin + H(+) = 7-carboxy-7-deazaguanine + NH4(+). It participates in purine metabolism; 7-cyano-7-deazaguanine biosynthesis. Functionally, catalyzes the complex heterocyclic radical-mediated conversion of 6-carboxy-5,6,7,8-tetrahydropterin (CPH4) to 7-carboxy-7-deazaguanine (CDG), a step common to the biosynthetic pathways of all 7-deazapurine-containing compounds. The polypeptide is 7-carboxy-7-deazaguanine synthase (Aquifex aeolicus (strain VF5)).